Reading from the N-terminus, the 33-residue chain is Mu/delta-theraphotoxin-Pm2a (33 aa).

Cystine bridges form between C2/C16, C9/C21, and C15/C27. F33 carries the post-translational modification Phenylalanine amide.

Expressed by the venom gland.

It is found in the secreted. Functionally, gating-modifier toxin with very weak activity on Nav1.7/SCN9A and Nav1.8/SCN10A. Shows 22% peak current inhibition (at 10 uM) on Nav1.8/SCN10A sodium channels. Show peak current inhibition and delays fast inactivation on Nav1.7/SCN9A (EC(50)&gt;10 uM). The sequence is that of Mu/delta-theraphotoxin-Pm2a from Poecilotheria metallica (Metallic blue ornamental tree spider).